A 248-amino-acid chain; its full sequence is 2,3-bisphosphoglycerate-dependent phosphoglycerate mutase (248 aa).

Substrate contacts are provided by residues 8 to 15, 21 to 22, Arg60, 87 to 90, Lys98, and 114 to 115; these read RHGESTWN, TG, ERHY, and RR. His9 acts as the Tele-phosphohistidine intermediate in catalysis. Residue Glu87 is the Proton donor/acceptor of the active site. The disordered stretch occupies residues 118–137; it reads DTPPPALEPTDPRASYDDPR. Basic and acidic residues predominate over residues 127–137; the sequence is TDPRASYDDPR. 183 to 184 contacts substrate; the sequence is GN.

It belongs to the phosphoglycerate mutase family. BPG-dependent PGAM subfamily. As to quaternary structure, homodimer.

It carries out the reaction (2R)-2-phosphoglycerate = (2R)-3-phosphoglycerate. It participates in carbohydrate degradation; glycolysis; pyruvate from D-glyceraldehyde 3-phosphate: step 3/5. Functionally, catalyzes the interconversion of 2-phosphoglycerate and 3-phosphoglycerate. This chain is 2,3-bisphosphoglycerate-dependent phosphoglycerate mutase, found in Cupriavidus necator (strain ATCC 17699 / DSM 428 / KCTC 22496 / NCIMB 10442 / H16 / Stanier 337) (Ralstonia eutropha).